A 467-amino-acid polypeptide reads, in one-letter code: Solute carrier family 52, riboflavin transporter, member 3 (467 aa).

Over 1-2 the chain is Cytoplasmic; sequence MA. The chain crosses the membrane as a helical span at residues 3 to 23; sequence FLIHLLVCTFGMGSWVAINGL. The Extracellular portion of the chain corresponds to 24–43; it reads WVELPLLVTELPEGWYLPSY. A helical membrane pass occupies residues 44 to 64; that stretch reads LTVIIQLANVGPLLVTLLHHF. Residues 65-71 are Cytoplasmic-facing; that stretch reads RPGCLSE. The helical transmembrane segment at 72 to 92 threads the bilayer; that stretch reads VAVVFTVLGVGTIACTLFAFL. Over 93–105 the chain is Extracellular; that stretch reads WNVTSWVLGSRHS. N-linked (GlcNAc...) asparagine glycosylation is present at Asn-94. A helical transmembrane segment spans residues 106–126; the sequence is IAFLVLTFFLALVDCTSSVTF. Residues 127-137 lie on the Cytoplasmic side of the membrane; the sequence is LPFMSRLPTYY. Residues 138 to 158 form a helical membrane-spanning segment; sequence LTTFFVGEGLSGLLPALVALA. Topologically, residues 159 to 220 are extracellular; that stretch reads QGSGLTTCVN…SRYLPANFSP (62 aa). Asn-168 is a glycosylation site (N-linked (GlcNAc...) asparagine). A helical transmembrane segment spans residues 221–241; that stretch reads LVFFLLLSFMMACCFISFFFL. Residues 242–294 lie on the Cytoplasmic side of the membrane; sequence QRQPKRWEASIEDLLTSQVTLNSIRPQEGKDLGPPEESGKAQDPPEEKTAPQH. A Phosphoserine modification is found at Ser-251. A disordered region spans residues 266 to 288; it reads RPQEGKDLGPPEESGKAQDPPEE. Residues 268-288 are compositionally biased toward basic and acidic residues; the sequence is QEGKDLGPPEESGKAQDPPEE. Residues 295 to 315 traverse the membrane as a helical segment; it reads LAHLTFIYVLVAFVNALTNGV. Over 316 to 333 the chain is Extracellular; that stretch reads LPSVQTYSCLSYGPVAYH. The helical transmembrane segment at 334–354 threads the bilayer; that stretch reads LSATLSSMASPLTCFLSIFLP. The Cytoplasmic portion of the chain corresponds to 355 to 359; it reads NRSLP. Residues 360-380 form a helical membrane-spanning segment; it reads FLGVLAVLGTSFGAYNMAMAV. Topologically, residues 381-394 are extracellular; sequence MSPCPFMQGHWGGE. The helical transmembrane segment at 395–415 threads the bilayer; sequence VLIVVSWVLFTGCLSYVKVML. Residues 416 to 425 lie on the Cytoplasmic side of the membrane; the sequence is GVILRDHSRS. A helical transmembrane segment spans residues 426 to 446; sequence ALLWCGAAVQLGSLLGAVVMF. Over 447–467 the chain is Extracellular; sequence PLVNVLRLFSSADFCSLQCSA.

The protein belongs to the riboflavin transporter family.

It is found in the cell membrane. The catalysed reaction is riboflavin(in) = riboflavin(out). Its function is as follows. Plasma membrane transporter mediating the uptake by cells of the water soluble vitamin B2/riboflavin that plays a key role in biochemical oxidation-reduction reactions of the carbohydrate, lipid, and amino acid metabolism. The protein is Solute carrier family 52, riboflavin transporter, member 3 (SLC52A3) of Bos taurus (Bovine).